The sequence spans 136 residues: uncharacterized protein (136 aa).

This is an uncharacterized protein from Caenorhabditis elegans.